Reading from the N-terminus, the 379-residue chain is MKFKLKTTSGAARRGELTFNRPQGEFSVQTPAFMPVGTYGTVKGMTPEEVRATGAEILLGNTFHLWLRPGQEVMRKHGDLHDFMQWHRPILTDSGGFQVFSLGKLRKITEEGVKFQNPINGERIFLSPEKSMEIQYDLGSDIVMIFDECTPYPATFDYAKKSMEMSLRWAKRSRDRFDELGNKNALFGIVQGGTFEELRKVSAENLINIGFDGYAVGGLAVGEPKEEMHRILEFTTPLLPADKPRYLMGVGKPEDLVEGVRRGIDMFDCVMPTRNARNGHLFVTDGIVKIRNAKYKDDTSPLDPHCDCYTCQHYTKSYLYHLDKCGEILGARLNTIHNLRYYQRLMEQIRTAIEQDRFDDFVQEFYARMDKPVPPLQKA.

Residue D93 is the Proton acceptor of the active site. Substrate is bound by residues 93-97 (DSGGF), D147, Q191, and G218. The RNA binding stretch occupies residues 249-255 (GVGKPED). D268 serves as the catalytic Nucleophile. Positions 273–277 (TRNAR) are RNA binding; important for wobble base 34 recognition. Residues C306, C308, C311, and H337 each contribute to the Zn(2+) site.

The protein belongs to the queuine tRNA-ribosyltransferase family. In terms of assembly, homodimer. Within each dimer, one monomer is responsible for RNA recognition and catalysis, while the other monomer binds to the replacement base PreQ1. Requires Zn(2+) as cofactor.

It catalyses the reaction 7-aminomethyl-7-carbaguanine + guanosine(34) in tRNA = 7-aminomethyl-7-carbaguanosine(34) in tRNA + guanine. It participates in tRNA modification; tRNA-queuosine biosynthesis. In terms of biological role, catalyzes the base-exchange of a guanine (G) residue with the queuine precursor 7-aminomethyl-7-deazaguanine (PreQ1) at position 34 (anticodon wobble position) in tRNAs with GU(N) anticodons (tRNA-Asp, -Asn, -His and -Tyr). Catalysis occurs through a double-displacement mechanism. The nucleophile active site attacks the C1' of nucleotide 34 to detach the guanine base from the RNA, forming a covalent enzyme-RNA intermediate. The proton acceptor active site deprotonates the incoming PreQ1, allowing a nucleophilic attack on the C1' of the ribose to form the product. After dissociation, two additional enzymatic reactions on the tRNA convert PreQ1 to queuine (Q), resulting in the hypermodified nucleoside queuosine (7-(((4,5-cis-dihydroxy-2-cyclopenten-1-yl)amino)methyl)-7-deazaguanosine). The sequence is that of Queuine tRNA-ribosyltransferase from Mannheimia succiniciproducens (strain KCTC 0769BP / MBEL55E).